Consider the following 944-residue polypeptide: Respiratory burst oxidase homolog protein F (944 aa).

Topologically, residues 2–387 are cytoplasmic; it reads KPFSKNDRRR…VYIMQENWKR (386 aa). Coiled-coil stretches lie at residues 102-126 and 157-184; these read QFSQ…KRFS and LEAR…RGLR. EF-hand-like regions lie at residues 207–215 and 241–252; these read EKNGYIYRS and RRLKVEKINHDE. EF-hand domains follow at residues 264–299 and 308–343; these read SFDS…SASA and QAEE…KDTY. 7 residues coordinate Ca(2+): Asp277, Asn279, Asp281, Arg283, Glu288, Asp321, and Tyr327. Residues Ser354 and Ser358 each carry the phosphoserine modification. Residues 388 to 408 form a helical membrane-spanning segment; it reads IWVLSLWIMIMIGLFLWKFFQ. At 409 to 475 the chain is on the extracellular side; that stretch reads YKQKDAFHVM…INFHKTIAGA (67 aa). The Ferric oxidoreductase domain occupies 426–583; it reads KGAAETLKFN…LFVIVYILLI (158 aa). Residues 476-492 form a helical membrane-spanning segment; it reads IVVAVILHIGDHLACDF. At 493–527 the chain is on the cytoplasmic side; the sequence is PRIVRATEYDYNRYLFHYFQTKQPTYFDLVKGPEG. A helical membrane pass occupies residues 528–548; the sequence is ITGILMVILMIISFTLATRWF. The Extracellular portion of the chain corresponds to 549-570; that stretch reads RRNLVKLPKPFDRLTGFNAFWY. Residues 571–591 traverse the membrane as a helical segment; sequence SHHLFVIVYILLILHGIFLYF. The Cytoplasmic portion of the chain corresponds to 592 to 599; it reads AKPWYVRT. A helical membrane pass occupies residues 600-617; that stretch reads TWMYLAVPVLLYGGERTL. The Extracellular segment spans residues 618 to 744; the sequence is RYFRSGSYSV…PYGAPAQDYR (127 aa). Residues 622 to 742 enclose the FAD-binding FR-type domain; sequence SGSYSVRLLK…DGPYGAPAQD (121 aa). A helical transmembrane segment spans residues 745–765; it reads KYDVLLLVGLGIGATPFISIL. Topologically, residues 766–944 are cytoplasmic; sequence KDLLNNIVKM…TKFEFHKEHF (179 aa).

The protein belongs to the RBOH (TC 5.B.1.3) family. As to quaternary structure, monomer and homodimer. Interacts (via N-terminus) with CIPK26. Interacts (via N-terminus) with SRC2. Not glycosylated. Phosphorylated by CIPK26. As to expression, expressed in roots, stems, seedlings, inflorescences, leaves and guard cells.

Its subcellular location is the cell membrane. Its activity is regulated as follows. Inhibited by diphenylene iodonium (DPI). In terms of biological role, calcium-dependent NADPH oxidase that generates superoxide. Generates reactive oxygen species (ROS) during incompatible interactions with pathogens and is important in the regulation of the hypersensitive response (HR). Involved in abscisic acid-induced stomatal closing and in UV-B and abscisic acid ROS-dependent signaling. This chain is Respiratory burst oxidase homolog protein F (RBOHF), found in Arabidopsis thaliana (Mouse-ear cress).